The primary structure comprises 1197 residues: Serine/threonine-protein kinase pakA (1197 aa).

Disordered regions lie at residues 1-96 (MEEK…PIYR), 328-383 (QKED…KNID), 430-468 (REEE…EQRN), 485-543 (EEEE…NLMG), and 562-819 (NSSG…RVGT). The segment covering 19 to 30 (QKFEQFLDKTDK) has biased composition (basic and acidic residues). A compositionally biased stretch (polar residues) spans 34–49 (ATRNNYRGPVSSSTGI). The segment covering 51–69 (NDKEKKSHSYFKVREEGSN) has biased composition (basic and acidic residues). Over residues 70–79 (KRPSSFSASN) the composition is skewed to polar residues. Low complexity-rich tracts occupy residues 80 to 94 (PITP…SSPI) and 346 to 381 (NNNN…NNKN). A compositionally biased stretch (basic and acidic residues) spans 439-458 (RVERELASRRRQEEDRIKRE). Positions 494–523 (SQLQSSQQQQKSSSTQRSSNTVTSTSSSST) are enriched in low complexity. Over residues 524–536 (GGDSNPSTSQKPT) the composition is skewed to polar residues. Threonine 585 carries the phosphothreonine; by PKB modification. Over residues 593-615 (SENTPLVSSIDNNGVNNKMSRSH) the composition is skewed to polar residues. Low complexity-rich tracts occupy residues 636–653 (NVNN…NNNH) and 671–707 (SSSM…SSPT). Over residues 718–727 (TTSTGSTRKG) the composition is skewed to polar residues. Positions 728–737 (SISEREDKKK) are enriched in basic and acidic residues. Positions 739–756 (SSSSTSSSSSSNGGLSSS) are enriched in low complexity. A compositionally biased stretch (basic and acidic residues) spans 757–790 (GKDHKKDHSSEEKEKEKKSFFNKLFSKEKKDHHS). The 14-residue stretch at 817–830 (VGTPFNVKHDVHVN) folds into the CRIB domain. A Protein kinase domain is found at 911–1164 (YYNINKIGEG…SSSLLHHPFL (254 aa)). ATP is bound by residues 917 to 925 (IGEGGAGEV) and lysine 940. Aspartate 1032 acts as the Proton acceptor in catalysis.

The protein belongs to the protein kinase superfamily. STE Ser/Thr protein kinase family. STE20 subfamily. It depends on Mg(2+) as a cofactor. Phosphorylation on Thr-585 results in cAMP-mediated activation and localization to the cytoskeleton. In terms of tissue distribution, colocalizes with myosin II to the cleavage furrow of cells undergoing cytokinesis and the posterior cortex of polarized cells.

Its subcellular location is the cytoplasm. The protein resides in the cytosol. The protein localises to the cytoskeleton. It catalyses the reaction L-seryl-[protein] + ATP = O-phospho-L-seryl-[protein] + ADP + H(+). The catalysed reaction is L-threonyl-[protein] + ATP = O-phospho-L-threonyl-[protein] + ADP + H(+). Functionally, regulator of the myosin II component of the cytoskeleton: required for regulation of cytokinesis. Functions during chemotaxis, required for maintaining the direction of cell movement, suppressing lateral pseudopod extension, and proper retraction of the posterior of chemotaxing cells. In Dictyostelium discoideum (Social amoeba), this protein is Serine/threonine-protein kinase pakA (pakA).